A 710-amino-acid chain; its full sequence is Iron-sulfur clusters transporter ATM1, mitochondrial (710 aa).

Residues 1–38 (MWLSLPRSGYGSVATLTSKRVLACLTPLRQFSTSPAVS) constitute a mitochondrion transit peptide. Residues 35-52 (PAVSNANHKNVDNINKSP) show a composition bias toward polar residues. Residues 35-83 (PAVSNANHKNVDNINKSPANDAANNAVEKGDKPTTSPEKLATKAEKSSA) form a disordered region. Over 39-129 (NANHKNVDNI…PKGKTSVKFR (91 aa)) the chain is Mitochondrial matrix. A helical membrane pass occupies residues 130–151 (VLVAVALLVGAKLLNVQVPFFF). The ABC transmembrane type-1 domain maps to 130–419 (VLVAVALLVG…LGSVYRDLRQ (290 aa)). The Mitochondrial intermembrane portion of the chain corresponds to 152–173 (KEIIDDMNIEWNSATALGVGIT). Residues 174-197 (ALIFSYGAARFGAVLFGELRNAIF) traverse the membrane as a helical segment. Over 198-246 (ASVAQKAIKEVATNVFRHLLKLDMAFHLSRQTGGITRAIDRGTKGISFV) the chain is Mitochondrial matrix. Residues 247-270 (LSSMVFHIIPIALEISLVCGILSY) traverse the membrane as a helical segment. Position 271 (Asn-271) is a topological domain, mitochondrial intermembrane. The helical transmembrane segment at 272-292 (FGWKYALVTGATMVSYAIFTI) threads the bilayer. Residues 293 to 358 (TTTSWRTKFR…ASIKIATSLA (66 aa)) are Mitochondrial matrix-facing. Glutathione is bound by residues 298 to 302 (RTKFR) and 361 to 364 (NSGQ). Residues 359 to 377 (FLNSGQNLIFSSALTAMMY) form a helical membrane-spanning segment. Over 378–392 (MTCCGVADGSLTVGD) the chain is Mitochondrial intermembrane. A helical transmembrane segment spans residues 393-414 (LVLVNQLVFQLSVPLNFLGSVY). Gly-411 serves as a coordination point for glutathione. Residues 415-710 (RDLRQSLLDM…AEEKAAKKDV (296 aa)) are Mitochondrial matrix-facing. An ABC transporter domain is found at 453-687 (IRFENVTYGY…DGLYKSMWDA (235 aa)). Residues Tyr-462 and 486–497 (GPSGSGKSTILK) contribute to the ATP site.

The protein belongs to the ABC transporter superfamily. ABCB family. Heavy Metal importer (TC 3.A.1.210) subfamily. As to quaternary structure, homodimer.

It is found in the mitochondrion inner membrane. Performs an essential function in the generation of cytoplasmic iron-sulfur proteins by mediating the ATP-dependent export of Fe/S cluster precursors synthesized by NFS1 and other mitochondrial proteins. Hydrolyzes ATP. Binds glutathione and may function by transporting a glutathione-conjugated iron-sulfur compound. This chain is Iron-sulfur clusters transporter ATM1, mitochondrial, found in Yarrowia lipolytica (strain CLIB 122 / E 150) (Yeast).